The chain runs to 195 residues: PRELI domain containing protein 3B (195 aa).

A PRELI/MSF1 domain is found at 1–172; it reads MKIWTSEHVF…VIHKLNAEIE (172 aa). Residues Ser-46 and Ser-51 each carry the phosphoserine modification.

This sequence belongs to the slowmo family.

This Mus musculus (Mouse) protein is PRELI domain containing protein 3B (Prelid3b).